Here is a 296-residue protein sequence, read N- to C-terminus: MESECLTPEWASQPCLMGIDEAGRGPVLGPMVYGCMYCPISYQSSLASLHFADSKTLKEEKREELYESLKLDKSLGWAVDVIDPRELSAKMLAKNKTNLNEISHNSAMGLIKRVLDMGVLLTEAYLDTVGDPDKYRIKLSERFPSIKFVVSKKADSLFPIVSGASIVAKVTRDRALKEWLVEETGEDINRNFGSGYPGDPETKAWLVQHKHSVFGFPSLVRFSWGTCTTHLKGEVEVAWEADENEESGNGSSSKRQAKLSSFGFKTCEKRSEEIESSGKGRCKFLQARKIQQLTQF.

The region spanning 14–236 is the RNase H type-2 domain; that stretch reads PCLMGIDEAG…CTTHLKGEVE (223 aa). A divalent metal cation is bound by residues D20, E21, and D127.

It belongs to the RNase HII family. Eukaryotic subfamily. The cofactor is Mn(2+). Requires Mg(2+) as cofactor.

It carries out the reaction Endonucleolytic cleavage to 5'-phosphomonoester.. In terms of biological role, catalytic subunit of RNase HII, an endonuclease that specifically degrades the RNA of RNA:DNA hybrids. Participates in DNA replication, possibly by mediating the removal of lagging-strand Okazaki fragment RNA primers during DNA replication. Mediates the excision of single ribonucleotides from DNA:RNA duplexes. The polypeptide is Ribonuclease H2 subunit A (Arabidopsis thaliana (Mouse-ear cress)).